The chain runs to 496 residues: L-arabinose isomerase (496 aa).

Mn(2+)-binding residues include Glu-302, Glu-329, His-346, and His-445.

This sequence belongs to the arabinose isomerase family. Mn(2+) serves as cofactor.

The catalysed reaction is beta-L-arabinopyranose = L-ribulose. It participates in carbohydrate degradation; L-arabinose degradation via L-ribulose; D-xylulose 5-phosphate from L-arabinose (bacterial route): step 1/3. Catalyzes the conversion of L-arabinose to L-ribulose. This chain is L-arabinose isomerase, found in Thermotoga petrophila (strain ATCC BAA-488 / DSM 13995 / JCM 10881 / RKU-1).